The following is a 126-amino-acid chain: Major sperm protein 3 (126 aa).

Ala-2 is subject to N-acetylalanine. The MSP domain occupies 8–125; the sequence is DIATMPAQKV…RRKNLPIEYN (118 aa).

In terms of tissue distribution, sperm.

It is found in the cell projection. It localises to the pseudopodium. The protein resides in the cytoplasm. The protein localises to the cytoskeleton. Central component in molecular interactions underlying sperm crawling. Forms an extensive filament system that extends from sperm villipoda, along the leading edge of the pseudopod. The polypeptide is Major sperm protein 3 (MSP-3) (Globodera rostochiensis (Golden nematode worm)).